The chain runs to 128 residues: Large ribosomal subunit protein bL17 (128 aa).

The protein belongs to the bacterial ribosomal protein bL17 family. As to quaternary structure, part of the 50S ribosomal subunit. Contacts protein L32.

In Histophilus somni (strain 129Pt) (Haemophilus somnus), this protein is Large ribosomal subunit protein bL17.